The following is a 404-amino-acid chain: Cysteine desulfurase IscS (404 aa).

Pyridoxal 5'-phosphate-binding positions include 75–76, asparagine 155, glutamine 183, and 203–205; these read AT and TGH. The residue at position 206 (lysine 206) is an N6-(pyridoxal phosphate)lysine. A pyridoxal 5'-phosphate-binding site is contributed by threonine 243. Cysteine 328 acts as the Cysteine persulfide intermediate in catalysis. Cysteine 328 contributes to the [2Fe-2S] cluster binding site.

Belongs to the class-V pyridoxal-phosphate-dependent aminotransferase family. NifS/IscS subfamily. As to quaternary structure, homodimer. Forms a heterotetramer with IscU, interacts with other sulfur acceptors. Pyridoxal 5'-phosphate serves as cofactor.

The protein localises to the cytoplasm. The catalysed reaction is (sulfur carrier)-H + L-cysteine = (sulfur carrier)-SH + L-alanine. Its pathway is cofactor biosynthesis; iron-sulfur cluster biosynthesis. Its function is as follows. Master enzyme that delivers sulfur to a number of partners involved in Fe-S cluster assembly, tRNA modification or cofactor biosynthesis. Catalyzes the removal of elemental sulfur atoms from cysteine to produce alanine. Functions as a sulfur delivery protein for Fe-S cluster synthesis onto IscU, an Fe-S scaffold assembly protein, as well as other S acceptor proteins. This chain is Cysteine desulfurase IscS, found in Enterobacter sp. (strain 638).